Here is a 252-residue protein sequence, read N- to C-terminus: Small ribosomal subunit protein uS3 (252 aa).

The KH type-2 domain occupies 38–106 (IRKYIHARLS…EVQINIFEIK (69 aa)). The disordered stretch occupies residues 214–252 (PLAGMDKKQSGTGGGKGGDAPRGKSNFNKGGKPDARKRK). Residues 224-233 (GTGGGKGGDA) show a composition bias toward gly residues.

Belongs to the universal ribosomal protein uS3 family. In terms of assembly, part of the 30S ribosomal subunit. Forms a tight complex with proteins S10 and S14.

Functionally, binds the lower part of the 30S subunit head. Binds mRNA in the 70S ribosome, positioning it for translation. This is Small ribosomal subunit protein uS3 from Flavobacterium johnsoniae (strain ATCC 17061 / DSM 2064 / JCM 8514 / BCRC 14874 / CCUG 350202 / NBRC 14942 / NCIMB 11054 / UW101) (Cytophaga johnsonae).